Here is a 233-residue protein sequence, read N- to C-terminus: Small ribosomal subunit protein uS3 (233 aa).

The KH type-2 domain occupies 39–107 (VRQFLMKTLE…PVQINISEVR (69 aa)).

Belongs to the universal ribosomal protein uS3 family. Part of the 30S ribosomal subunit. Forms a tight complex with proteins S10 and S14.

Functionally, binds the lower part of the 30S subunit head. Binds mRNA in the 70S ribosome, positioning it for translation. In Buchnera aphidicola subsp. Acyrthosiphon pisum (strain 5A), this protein is Small ribosomal subunit protein uS3.